Here is a 92-residue protein sequence, read N- to C-terminus: Small ribosomal subunit protein uS19c (92 aa).

Belongs to the universal ribosomal protein uS19 family.

The protein localises to the plastid. It localises to the chloroplast. In terms of biological role, protein S19 forms a complex with S13 that binds strongly to the 16S ribosomal RNA. This is Small ribosomal subunit protein uS19c from Gracilaria tenuistipitata var. liui (Red alga).